We begin with the raw amino-acid sequence, 604 residues long: Glutamine--fructose-6-phosphate aminotransferase [isomerizing] (604 aa).

C2 functions as the Nucleophile; for GATase activity in the catalytic mechanism. In terms of domain architecture, Glutamine amidotransferase type-2 spans 2 to 218 (CGIVGVVGNR…DKELVVLTKD (217 aa)). SIS domains follow at residues 284–423 (IVKS…ANGK) and 456–594 (VANL…VDKP). K599 acts as the For Fru-6P isomerization activity in catalysis.

In terms of assembly, homodimer.

The protein resides in the cytoplasm. It catalyses the reaction D-fructose 6-phosphate + L-glutamine = D-glucosamine 6-phosphate + L-glutamate. Catalyzes the first step in hexosamine metabolism, converting fructose-6P into glucosamine-6P using glutamine as a nitrogen source. The polypeptide is Glutamine--fructose-6-phosphate aminotransferase [isomerizing] (Streptococcus mutans serotype c (strain ATCC 700610 / UA159)).